The primary structure comprises 277 residues: 3-methyl-2-oxobutanoate hydroxymethyltransferase (277 aa).

Positions 42 and 81 each coordinate Mg(2+). 3-methyl-2-oxobutanoate is bound by residues 42 to 43, D81, and K110; that span reads DS. Residue E112 coordinates Mg(2+). The Proton acceptor role is filled by E179.

Belongs to the PanB family. As to quaternary structure, homodecamer; pentamer of dimers. It depends on Mg(2+) as a cofactor.

Its subcellular location is the cytoplasm. It catalyses the reaction 3-methyl-2-oxobutanoate + (6R)-5,10-methylene-5,6,7,8-tetrahydrofolate + H2O = 2-dehydropantoate + (6S)-5,6,7,8-tetrahydrofolate. It participates in cofactor biosynthesis; (R)-pantothenate biosynthesis; (R)-pantoate from 3-methyl-2-oxobutanoate: step 1/2. Its function is as follows. Catalyzes the reversible reaction in which hydroxymethyl group from 5,10-methylenetetrahydrofolate is transferred onto alpha-ketoisovalerate to form ketopantoate. The chain is 3-methyl-2-oxobutanoate hydroxymethyltransferase from Anaplasma marginale (strain St. Maries).